Consider the following 2198-residue polypeptide: RNA-directed RNA polymerase L (2198 aa).

The endonuclease stretch occupies residues Lys26–Cys284. Residues Glu51, Asp89, and Glu102 each coordinate Mn(2+). Lys115 is an active-site residue. A RdRp catalytic domain is found at Cys1161 to Val1359. Position 1319 (Asp1319) interacts with Mg(2+).

The protein belongs to the Bunyavirales RNA polymerase family. As to quaternary structure, homomultimer; the oligomeric structure is essential for the polymerase activity. Interacts with nucleoprotein N. Interacts with protein Z; this interaction inhibits viral transcription and replication, Z partially blocks the product exit tunnel for the releasing nascent RNA product. Requires Mn(2+) as cofactor. The cofactor is Mg(2+).

Its subcellular location is the virion. It is found in the host cytoplasm. The enzyme catalyses RNA(n) + a ribonucleoside 5'-triphosphate = RNA(n+1) + diphosphate. In terms of biological role, RNA-dependent RNA polymerase, which is responsible for the replication and transcription of the viral RNA genome using antigenomic RNA as an intermediate. During transcription, synthesizes subgenomic RNAs and assures their capping by a cap-snatching mechanism, which involves the endonuclease activity cleaving the host capped pre-mRNAs. These short capped RNAs are then used as primers for viral transcription. The 3'-end of subgenomic mRNAs molecules are heterogeneous and not polyadenylated. The replicase function is to direct synthesis of antigenomic and genomic RNA which are encapsidated and non capped. As a consequence of the use of the same enzyme for both transcription and replication, these mechanisms need to be well coordinated. These processes may be regulated by proteins N and Z in a dose-dependent manner. Z protein inhibits the viral polymerase L und thus the viral transcription and RNA synthesis. The chain is RNA-directed RNA polymerase L from Homo sapiens (Human).